The sequence spans 120 residues: Transcription elongation factor 1 homolog (120 aa).

The Zn(2+) site is built by C25, C28, C49, and C52. Acidic residues predominate over residues 84 to 110; it reads EDDVVQEEEEEVEEEEEEEEEEDDEDD. The segment at 84–120 is disordered; sequence EDDVVQEEEEEVEEEEEEEEEEDDEDDHVSVKRKYNF.

This sequence belongs to the ELOF1 family.

It localises to the nucleus. Its function is as follows. Transcription elongation factor implicated in the maintenance of proper chromatin structure in actively transcribed regions. The polypeptide is Transcription elongation factor 1 homolog (Arabidopsis thaliana (Mouse-ear cress)).